Here is a 440-residue protein sequence, read N- to C-terminus: GTPase Der (440 aa).

EngA-type G domains lie at 4 to 168 and 177 to 352; these read PVVA…PPEK and IKIA…GRHS. Residues 10-17, 57-61, 120-123, 183-190, 230-234, and 295-298 contribute to the GTP site; these read GRPNVGKS, DTGGL, NKVE, DTAGM, and NKWD. The region spanning 353 to 437 is the KH-like domain; sequence MRISTPGLNA…PIRFVLRKKT (85 aa).

The protein belongs to the TRAFAC class TrmE-Era-EngA-EngB-Septin-like GTPase superfamily. EngA (Der) GTPase family. As to quaternary structure, associates with the 50S ribosomal subunit.

GTPase that plays an essential role in the late steps of ribosome biogenesis. The chain is GTPase Der from Pelotomaculum thermopropionicum (strain DSM 13744 / JCM 10971 / SI).